A 65-amino-acid chain; its full sequence is MPKIKTNRAAAKRFRKTASGKYKCGHANRSHILTKKATKRKRNLRQTGHVRAEDAGRLDRMLPYL.

The protein belongs to the bacterial ribosomal protein bL35 family.

The protein is Large ribosomal subunit protein bL35 of Stenotrophomonas maltophilia (strain R551-3).